A 607-amino-acid polypeptide reads, in one-letter code: Elongation factor 4 (607 aa).

The tr-type G domain occupies 11–193; sequence EKIRNFSIIA…QIVEKVPAPQ (183 aa). GTP contacts are provided by residues 23–28 and 140–143; these read DHGKST and NKID.

The protein belongs to the TRAFAC class translation factor GTPase superfamily. Classic translation factor GTPase family. LepA subfamily.

It is found in the cell membrane. The catalysed reaction is GTP + H2O = GDP + phosphate + H(+). Required for accurate and efficient protein synthesis under certain stress conditions. May act as a fidelity factor of the translation reaction, by catalyzing a one-codon backward translocation of tRNAs on improperly translocated ribosomes. Back-translocation proceeds from a post-translocation (POST) complex to a pre-translocation (PRE) complex, thus giving elongation factor G a second chance to translocate the tRNAs correctly. Binds to ribosomes in a GTP-dependent manner. The protein is Elongation factor 4 of Lactococcus lactis subsp. cremoris (strain MG1363).